A 235-amino-acid polypeptide reads, in one-letter code: Ribonuclease 3 (235 aa).

In terms of domain architecture, RNase III spans 6–131 (IDQLFKLTGH…LIAVMYLDGG (126 aa)). E44 contacts Mg(2+). D48 is an active-site residue. 2 residues coordinate Mg(2+): D117 and E120. E120 is a catalytic residue. The DRBM domain occupies 156 to 225 (DAKTELQEWA…AEKILRREGV (70 aa)).

The protein belongs to the ribonuclease III family. In terms of assembly, homodimer. The cofactor is Mg(2+).

The protein resides in the cytoplasm. It catalyses the reaction Endonucleolytic cleavage to 5'-phosphomonoester.. Functionally, digests double-stranded RNA. Involved in the processing of primary rRNA transcript to yield the immediate precursors to the large and small rRNAs (23S and 16S). Processes some mRNAs, and tRNAs when they are encoded in the rRNA operon. Processes pre-crRNA and tracrRNA of type II CRISPR loci if present in the organism. This chain is Ribonuclease 3, found in Bartonella tribocorum (strain CIP 105476 / IBS 506).